The primary structure comprises 374 residues: O-methyltransferase 16 (374 aa).

Positions 195, 219, 242, 262, and 276 each coordinate S-adenosyl-L-homocysteine. Position 242 (D242) interacts with S-adenosyl-L-methionine. Residue H280 is the Proton acceptor of the active site.

Belongs to the class I-like SAM-binding methyltransferase superfamily. Cation-independent O-methyltransferase family. In terms of assembly, homodimer. Expressed mainly in vasculature and cortex tissues at low levels.

The catalysed reaction is dopamine + S-adenosyl-L-methionine = 4-methoxytyramine + S-adenosyl-L-homocysteine + H(+). The protein operates within aromatic compound metabolism. It functions in the pathway alkaloid biosynthesis. In terms of biological role, O-methyltransferase participating in the biosynthesis of natural products derived from phenylethylamine, including mescaline, a natural hallucinogen potentially used in psychotherapeutic treatments. Catalyzes the O-methylation of dopamine to produce 4-methoxytyramine. The polypeptide is O-methyltransferase 16 (Lophophora williamsii (Peyote)).